Here is a 194-residue protein sequence, read N- to C-terminus: Crossover junction endodeoxyribonuclease RuvC (194 aa).

Residues aspartate 8, glutamate 72, and aspartate 144 contribute to the active site. Residues aspartate 8, glutamate 72, and aspartate 144 each coordinate Mg(2+).

The protein belongs to the RuvC family. As to quaternary structure, homodimer which binds Holliday junction (HJ) DNA. The HJ becomes 2-fold symmetrical on binding to RuvC with unstacked arms; it has a different conformation from HJ DNA in complex with RuvA. In the full resolvosome a probable DNA-RuvA(4)-RuvB(12)-RuvC(2) complex forms which resolves the HJ. The cofactor is Mg(2+).

It is found in the cytoplasm. It carries out the reaction Endonucleolytic cleavage at a junction such as a reciprocal single-stranded crossover between two homologous DNA duplexes (Holliday junction).. Functionally, the RuvA-RuvB-RuvC complex processes Holliday junction (HJ) DNA during genetic recombination and DNA repair. Endonuclease that resolves HJ intermediates. Cleaves cruciform DNA by making single-stranded nicks across the HJ at symmetrical positions within the homologous arms, yielding a 5'-phosphate and a 3'-hydroxyl group; requires a central core of homology in the junction. The consensus cleavage sequence is 5'-(A/T)TT(C/G)-3'. Cleavage occurs on the 3'-side of the TT dinucleotide at the point of strand exchange. HJ branch migration catalyzed by RuvA-RuvB allows RuvC to scan DNA until it finds its consensus sequence, where it cleaves and resolves the cruciform DNA. The protein is Crossover junction endodeoxyribonuclease RuvC of Psychrobacter arcticus (strain DSM 17307 / VKM B-2377 / 273-4).